Consider the following 434-residue polypeptide: Enolase (434 aa).

Gln-163 is a (2R)-2-phosphoglycerate binding site. The active-site Proton donor is the Glu-205. Mg(2+) is bound by residues Asp-242, Glu-291, and Asp-318. Residues Lys-343, Arg-372, Ser-373, and Lys-394 each contribute to the (2R)-2-phosphoglycerate site. Residue Lys-343 is the Proton acceptor of the active site.

It belongs to the enolase family. Mg(2+) is required as a cofactor.

The protein resides in the cytoplasm. The protein localises to the secreted. It localises to the cell surface. The catalysed reaction is (2R)-2-phosphoglycerate = phosphoenolpyruvate + H2O. The protein operates within carbohydrate degradation; glycolysis; pyruvate from D-glyceraldehyde 3-phosphate: step 4/5. In terms of biological role, catalyzes the reversible conversion of 2-phosphoglycerate (2-PG) into phosphoenolpyruvate (PEP). It is essential for the degradation of carbohydrates via glycolysis. This chain is Enolase, found in Streptococcus intermedius.